The chain runs to 321 residues: CRISPR-associated endonuclease Cas1 2 (321 aa).

Positions 150, 213, and 228 each coordinate Mn(2+).

This sequence belongs to the CRISPR-associated endonuclease Cas1 family. Homodimer, forms a heterotetramer with a Cas2 homodimer. Mg(2+) serves as cofactor. It depends on Mn(2+) as a cofactor.

Its function is as follows. CRISPR (clustered regularly interspaced short palindromic repeat), is an adaptive immune system that provides protection against mobile genetic elements (viruses, transposable elements and conjugative plasmids). CRISPR clusters contain spacers, sequences complementary to antecedent mobile elements, and target invading nucleic acids. CRISPR clusters are transcribed and processed into CRISPR RNA (crRNA). Acts as a dsDNA endonuclease. Involved in the integration of spacer DNA into the CRISPR cassette. The chain is CRISPR-associated endonuclease Cas1 2 from Moorella thermoacetica (strain ATCC 39073 / JCM 9320).